We begin with the raw amino-acid sequence, 400 residues long: CinA-like protein (400 aa).

Belongs to the CinA family.

In Escherichia coli (strain SE11), this protein is CinA-like protein.